Reading from the N-terminus, the 192-residue chain is Iodate reductase subunit IdrB (192 aa).

A signal peptide (tat-type signal) is located at residues 1-52 (MSENIIPVRAVPAHDHEHDGERACMSRRRFLLFGGTSVALLSIASLPGVAQV). Residues 102–173 (GADKDIVAFN…LEVQGDDIYA (72 aa)) enclose the Rieske domain. [2Fe-2S] cluster is bound by residues cysteine 114, histidine 116, cysteine 135, and histidine 138.

This sequence belongs to the AOX family. As to quaternary structure, the iodate reductase (Idr) complex is composed of a molybdopterin-dependent iodate reductase (IdrA and IdrB subunits) and two associated peroxidases (IdrP1 and IdrP2). [2Fe-2S] cluster is required as a cofactor. Predicted to be exported by the Tat system. The position of the signal peptide cleavage has not been experimentally proven.

Its subcellular location is the periplasm. In terms of biological role, involved in iodate respiration. Probably catalyzes the reduction of iodate (IO(3)(-)) to hypoiodous acid (HIO) and H(2)O(2), using a reduced cytochrome c as the electron donor. The chain is Iodate reductase subunit IdrB from Pseudomonas sp. (strain SCT).